A 675-amino-acid chain; its full sequence is DNA ligase (675 aa).

NAD(+) contacts are provided by residues 32–36 (DAEYD), 81–82 (SL), and glutamate 113. Lysine 115 serves as the catalytic N6-AMP-lysine intermediate. Positions 136, 173, 291, and 315 each coordinate NAD(+). Cysteine 409, cysteine 412, cysteine 427, and cysteine 433 together coordinate Zn(2+). The region spanning 595–675 (SEKTYFFNKK…ELNSLIRIKE (81 aa)) is the BRCT domain.

Belongs to the NAD-dependent DNA ligase family. LigA subfamily. It depends on Mg(2+) as a cofactor. Requires Mn(2+) as cofactor.

The enzyme catalyses NAD(+) + (deoxyribonucleotide)n-3'-hydroxyl + 5'-phospho-(deoxyribonucleotide)m = (deoxyribonucleotide)n+m + AMP + beta-nicotinamide D-nucleotide.. DNA ligase that catalyzes the formation of phosphodiester linkages between 5'-phosphoryl and 3'-hydroxyl groups in double-stranded DNA using NAD as a coenzyme and as the energy source for the reaction. It is essential for DNA replication and repair of damaged DNA. The sequence is that of DNA ligase from Buchnera aphidicola subsp. Acyrthosiphon pisum (strain APS) (Acyrthosiphon pisum symbiotic bacterium).